The primary structure comprises 520 residues: DNA mismatch repair protein MutL (520 aa).

This sequence belongs to the DNA mismatch repair MutL/HexB family.

Its function is as follows. This protein is involved in the repair of mismatches in DNA. It is required for dam-dependent methyl-directed DNA mismatch repair. May act as a 'molecular matchmaker', a protein that promotes the formation of a stable complex between two or more DNA-binding proteins in an ATP-dependent manner without itself being part of a final effector complex. In Persephonella marina (strain DSM 14350 / EX-H1), this protein is DNA mismatch repair protein MutL.